Here is a 32-residue protein sequence, read N- to C-terminus: Photosystem II reaction center protein Z (32 aa).

A helical membrane pass occupies residues Phe-9–Val-31.

It belongs to the PsbZ family. PSII is composed of 1 copy each of membrane proteins PsbA, PsbB, PsbC, PsbD, PsbE, PsbF, PsbH, PsbI, PsbJ, PsbK, PsbL, PsbM, PsbT, PsbY, PsbZ, Psb30/Ycf12, at least 3 peripheral proteins of the oxygen-evolving complex and a large number of cofactors. It forms dimeric complexes.

It localises to the plastid. The protein resides in the chloroplast thylakoid membrane. May control the interaction of photosystem II (PSII) cores with the light-harvesting antenna, regulates electron flow through the 2 photosystem reaction centers. PSII is a light-driven water plastoquinone oxidoreductase, using light energy to abstract electrons from H(2)O, generating a proton gradient subsequently used for ATP formation. The polypeptide is Photosystem II reaction center protein Z (Euglena stellata).